The chain runs to 325 residues: NADH-quinone oxidoreductase subunit H (325 aa).

8 helical membrane passes run 11–31 (ILLT…CGAF), 81–101 (VIFT…FAIV), 114–134 (IGIL…LFAG), 154–174 (LSYE…AGSF), 186–206 (VWNV…GVAV), 237–257 (FFVG…TLFF), 265–285 (LPPF…FILI), and 304–324 (ICLP…LWQA).

It belongs to the complex I subunit 1 family. NDH-1 is composed of 13 different subunits. Subunits NuoA, H, J, K, L, M, N constitute the membrane sector of the complex.

Its subcellular location is the cell inner membrane. It carries out the reaction a quinone + NADH + 5 H(+)(in) = a quinol + NAD(+) + 4 H(+)(out). Functionally, NDH-1 shuttles electrons from NADH, via FMN and iron-sulfur (Fe-S) centers, to quinones in the respiratory chain. The immediate electron acceptor for the enzyme in this species is believed to be ubiquinone. Couples the redox reaction to proton translocation (for every two electrons transferred, four hydrogen ions are translocated across the cytoplasmic membrane), and thus conserves the redox energy in a proton gradient. This subunit may bind ubiquinone. The protein is NADH-quinone oxidoreductase subunit H of Escherichia fergusonii (strain ATCC 35469 / DSM 13698 / CCUG 18766 / IAM 14443 / JCM 21226 / LMG 7866 / NBRC 102419 / NCTC 12128 / CDC 0568-73).